The chain runs to 265 residues: Glutamate racemase (265 aa).

Substrate is bound by residues 12–13 and 44–45; these read DS and YG. The active-site Proton donor/acceptor is cysteine 75. 76 to 77 provides a ligand contact to substrate; sequence NT. Residue cysteine 186 is the Proton donor/acceptor of the active site. Residue 187–188 coordinates substrate; sequence TH.

This sequence belongs to the aspartate/glutamate racemases family.

The enzyme catalyses L-glutamate = D-glutamate. The protein operates within cell wall biogenesis; peptidoglycan biosynthesis. Its function is as follows. Provides the (R)-glutamate required for cell wall biosynthesis. This chain is Glutamate racemase, found in Pseudomonas putida (strain GB-1).